Reading from the N-terminus, the 556-residue chain is 2-succinyl-5-enolpyruvyl-6-hydroxy-3-cyclohexene-1-carboxylate synthase (556 aa).

It belongs to the TPP enzyme family. MenD subfamily. As to quaternary structure, homodimer. Mg(2+) is required as a cofactor. The cofactor is Mn(2+). It depends on thiamine diphosphate as a cofactor.

It carries out the reaction isochorismate + 2-oxoglutarate + H(+) = 5-enolpyruvoyl-6-hydroxy-2-succinyl-cyclohex-3-ene-1-carboxylate + CO2. It functions in the pathway quinol/quinone metabolism; 1,4-dihydroxy-2-naphthoate biosynthesis; 1,4-dihydroxy-2-naphthoate from chorismate: step 2/7. It participates in quinol/quinone metabolism; menaquinone biosynthesis. In terms of biological role, catalyzes the thiamine diphosphate-dependent decarboxylation of 2-oxoglutarate and the subsequent addition of the resulting succinic semialdehyde-thiamine pyrophosphate anion to isochorismate to yield 2-succinyl-5-enolpyruvyl-6-hydroxy-3-cyclohexene-1-carboxylate (SEPHCHC). This Salmonella typhimurium (strain LT2 / SGSC1412 / ATCC 700720) protein is 2-succinyl-5-enolpyruvyl-6-hydroxy-3-cyclohexene-1-carboxylate synthase.